The following is a 544-amino-acid chain: Chaperonin GroEL 1 (544 aa).

Residues 29 to 32 (TLGP), 86 to 90 (DGTTT), G413, and D495 each bind ATP. The tract at residues 525–544 (PEPKTNTPASSGSGMSDYDY) is disordered. The segment covering 528–538 (KTNTPASSGSG) has biased composition (polar residues).

It belongs to the chaperonin (HSP60) family. As to quaternary structure, forms a cylinder of 14 subunits composed of two heptameric rings stacked back-to-back. Interacts with the co-chaperonin GroES.

The protein resides in the cytoplasm. The catalysed reaction is ATP + H2O + a folded polypeptide = ADP + phosphate + an unfolded polypeptide.. In terms of biological role, together with its co-chaperonin GroES, plays an essential role in assisting protein folding. The GroEL-GroES system forms a nano-cage that allows encapsulation of the non-native substrate proteins and provides a physical environment optimized to promote and accelerate protein folding. In Synechococcus sp. (strain JA-2-3B'a(2-13)) (Cyanobacteria bacterium Yellowstone B-Prime), this protein is Chaperonin GroEL 1.